The primary structure comprises 284 residues: Transmembrane protein 163b (284 aa).

Residues 1 to 44 (MTDSSSASDPTAGPVDPGPAPSAPDPALEDPASTPANGHHPNQA) form a disordered region. At 1–83 (MTDSSSASDP…HEAQSYRKKA (83 aa)) the chain is on the cytoplasmic side. A helical membrane pass occupies residues 84–104 (LWVSWVSIVVTMILAIAAFTV). The Extracellular portion of the chain corresponds to 105 to 111 (SIMRHSA). Residues 112–132 (SAFGFAFDATLDVLSSIIVLW) form a helical membrane-spanning segment. The Cytoplasmic portion of the chain corresponds to 133–145 (RYSNAAAVHSAHR). The helical transmembrane segment at 146–166 (EYIACVILGVVFILSAITILV) threads the bilayer. The Extracellular segment spans residues 167 to 182 (KAIHDLATKLEPEVDD). The chain crosses the membrane as a helical span at residues 183 to 203 (FLYSVSVISGVVCTVLCVCKF). Topologically, residues 204 to 212 (MLGKVLTSR) are cytoplasmic. The helical transmembrane segment at 213 to 233 (ALITDGFNSLVGGVMGFSILI) threads the bilayer. The Extracellular portion of the chain corresponds to 234 to 243 (SAEVFKHEPS). The helical transmembrane segment at 244–264 (VWFLDGTIGILIGLIILAYGV) threads the bilayer. The Cytoplasmic segment spans residues 265 to 284 (KLLKDMVPRIRQTRHYERFE).

It belongs to the TMEM163 family.

The protein localises to the cytoplasmic vesicle. It is found in the secretory vesicle. The protein resides in the synaptic vesicle membrane. It localises to the early endosome membrane. Its subcellular location is the late endosome membrane. The protein localises to the lysosome membrane. It is found in the cell membrane. It carries out the reaction Zn(2+)(in) = Zn(2+)(out). In terms of biological role, zinc ion transporter that mediates zinc efflux and plays a crucial role in intracellular zinc homeostasis. Binds the divalent cations Zn(2+), Ni(2+), and to a minor extent Cu(2+). Is a functional modulator of P2X purinoceptors, including P2RX1, P2RX3, P2RX4 and P2RX7. Plays a role in central nervous system development and is required for myelination, and survival and proliferation of oligodendrocytes. In Danio rerio (Zebrafish), this protein is Transmembrane protein 163b.